The sequence spans 282 residues: Armadillo repeat-containing protein 1 (282 aa).

Met1 bears the N-acetylmethionine mark. One copy of the ARM repeat lies at 39–81 (GCLPGLILFMDHPNPPVVHSALLALRYLAECRANREKMKGELG). Thr137 is subject to Phosphothreonine. Residues Ser189, Ser246, Ser260, and Ser267 each carry the phosphoserine modification. The segment at 239 to 261 (DYLPEDESPTKEQDKAVSRVGSH) is disordered. A compositionally biased stretch (basic and acidic residues) spans 246–255 (SPTKEQDKAV).

In terms of assembly, interacts with mitochondrial contact site and cristae organizing system (MICOS) complex components IMMT/MIC60 and MICOS10/MIC10. Interacts with mitochondrial outer membrane sorting assembly machinery (SAM) complex components SAMM50 and MTX1.

The protein resides in the cytoplasm. The protein localises to the mitochondrion. It localises to the mitochondrion outer membrane. Its function is as follows. In association with mitochondrial contact site and cristae organizing system (MICOS) complex components and mitochondrial outer membrane sorting assembly machinery (SAM) complex components may regulate mitochondrial dynamics playing a role in determining mitochondrial length, distribution and motility. This chain is Armadillo repeat-containing protein 1 (ARMC1), found in Bos taurus (Bovine).